A 508-amino-acid chain; its full sequence is Flavonoid 3',5'-hydroxylase 2 (508 aa).

C443 is a heme binding site.

Belongs to the cytochrome P450 family. Heme is required as a cofactor. Flowers.

The protein resides in the microsome. It localises to the endoplasmic reticulum. The catalysed reaction is a 3',5'-unsubstituted flavanone + 2 reduced [NADPH--hemoprotein reductase] + 2 O2 = a 3',5'-dihydroxyflavanone + 2 oxidized [NADPH--hemoprotein reductase] + 2 H2O + 2 H(+). It participates in pigment biosynthesis; anthocyanin biosynthesis. Catalyzes the 3'5'-hydroxylation of naringenin and eriodictyol to form 5,7,3,'4',5'-pentahydroxyflavanone and 3',5'-hydroxylation of dihydrokaempferol and dihydroquercetin to form dihydromyricetin. The protein is Flavonoid 3',5'-hydroxylase 2 (CYP75A3) of Petunia hybrida (Petunia).